The primary structure comprises 260 residues: Crotonyl-CoA hydratase (260 aa).

The active-site Nucleophile is the Glu114. The Proton acceptor role is filled by Glu134.

Belongs to the enoyl-CoA hydratase/isomerase family. As to quaternary structure, homotetramer.

It is found in the cytoplasm. The enzyme catalyses 3-hydroxybutanoyl-CoA = (2E)-butenoyl-CoA + H2O. The catalysed reaction is a short-chain (3S)-3-hydroxyacyl-CoA = a short-chain (2E)-enoyl-CoA + H2O. Its pathway is lipid metabolism; butanoate metabolism. In terms of biological role, involved in syntrophic growth of S.wolfei with butyrate, as part of the butyrate oxidation pathway. Probably catalyzes the hydration of crotonyl-CoA to 3-hydroxybutyryl-CoA. In Syntrophomonas wolfei subsp. wolfei (strain DSM 2245B / Goettingen), this protein is Crotonyl-CoA hydratase.